A 793-amino-acid chain; its full sequence is Splicing factor 3A subunit 1 (793 aa).

The segment at 1-43 is disordered; sequence MPAGPVQAVPPPPPVPTEPKQPTEEEASSKEDSAPSKPVVGII. A compositionally biased stretch (pro residues) spans 8–19; it reads AVPPPPPVPTEP. Lys-20 participates in a covalent cross-link: Glycyl lysine isopeptide (Lys-Gly) (interchain with G-Cter in SUMO2). The span at 21–34 shows a compositional bias: basic and acidic residues; it reads QPTEEEASSKEDSA. An SURP motif 1 repeat occupies 52-94; it reads IVDKTASFVARNGPEFEARIRQNEINNPKFNFLNPNDPYHAYY. Residue Lys-55 is modified to N6-acetyllysine. Lys-131 participates in a covalent cross-link: Glycyl lysine isopeptide (Lys-Gly) (interchain with G-Cter in SUMO2). An SURP motif 2 repeat occupies 166 to 208; sequence VVKLTAQFVARNGRQFLTQLMQKEQRNYQFDFLRPQHSLFNYF. The disordered stretch occupies residues 318–428; the sequence is GESEEVEMEV…KIPASKMQEH (111 aa). Residues Ser-320, Ser-329, and Ser-359 each carry the phosphoserine modification. Composition is skewed to acidic residues over residues 320–334 and 354–364; these read SEEV…EEDD and DMDEGSDDEEE. Positions 368–384 are enriched in pro residues; sequence VPPPPETPMPPPLPPTP. Basic and acidic residues predominate over residues 388-397; sequence IVRKDYDPKA. Ser-413 carries the phosphoserine modification. Residue Lys-424 forms a Glycyl lysine isopeptide (Lys-Gly) (interchain with G-Cter in SUMO2) linkage. The residue at position 451 (Ser-451) is a Phosphoserine. Tyr-456 carries the post-translational modification Phosphotyrosine. Residues 488–502 show a composition bias toward basic and acidic residues; that stretch reads IGEEEIQKPEEKVTW. Disordered stretches follow at residues 488-518, 530-584, and 665-688; these read IGEE…AAQA, HKAK…TMPP, and APMP…LKTE. Lys-499 is covalently cross-linked (Glycyl lysine isopeptide (Lys-Gly) (interchain with G-Cter in SUMO2)). Ser-508 is subject to Phosphoserine. A compositionally biased stretch (polar residues) spans 509-518; that stretch reads MARTQQAAQA. Lys-542 is covalently cross-linked (Glycyl lysine isopeptide (Lys-Gly) (interchain with G-Cter in SUMO2)). Positions 665–675 are enriched in pro residues; sequence APMPPVHPPPP. Positions 680–702 are required and sufficient for nuclear import; the sequence is PTSKKLKTEDSLMPEEEFLRRNK. Lys-686 participates in a covalent cross-link: Glycyl lysine isopeptide (Lys-Gly) (interchain with G-Cter in SUMO2). Residues 707–793 form the Ubiquitin-like domain; sequence IKVQVPNMQD…ALKERGGRKK (87 aa). Phosphotyrosine is present on Tyr-759.

As to quaternary structure, component of the 17S U2 SnRNP complex, a ribonucleoprotein complex that contains small nuclear RNA (snRNA) U2 and a number of specific proteins. Part of the SF3A subcomplex of the 17S U2 SnRNP complex which is composed of three subunits; SF3A3/SAP61, SF3A2/SAP62 and SF3A1/SAP114. SF3A associates with the splicing factor SF3B and a 12S RNA unit to form the mature 17S U2 small nuclear ribonucleoprotein complex (17S U2 snRNP). SF3A1 functions as a scaffold that interacts directly with both SF3A2 and SF3A3. Identified in the spliceosome 'E' complex, a precursor of the spliceosome 'A' complex. Identified in the spliceosome 'A' and 'B' complexes. Identified in the spliceosome 'C' complex. Interacts with P2RX6; resulting in a reduction of the splicing activity. As to expression, ubiquitously expressed.

It is found in the nucleus. The protein localises to the nucleus speckle. Functionally, component of the 17S U2 SnRNP complex of the spliceosome, a large ribonucleoprotein complex that removes introns from transcribed pre-mRNAs. The 17S U2 SnRNP complex (1) directly participates in early spliceosome assembly and (2) mediates recognition of the intron branch site during pre-mRNA splicing by promoting the selection of the pre-mRNA branch-site adenosine, the nucleophile for the first step of splicing. Within the 17S U2 SnRNP complex, SF3A1 is part of the SF3A subcomplex that contributes to the assembly of the 17S U2 snRNP, and the subsequent assembly of the pre-spliceosome 'E' complex and the pre-catalytic spliceosome 'A' complex. Involved in pre-mRNA splicing as a component of pre-catalytic spliceosome 'B' complexes. In Homo sapiens (Human), this protein is Splicing factor 3A subunit 1 (SF3A1).